The sequence spans 313 residues: Monoglyceride lipase (313 aa).

A GXSXG motif is present at residues 121–125 (GHSMG). Ser-123 acts as the Nucleophile in catalysis. Residues Asp-251 and His-281 each act as charge relay system in the active site.

This sequence belongs to the AB hydrolase superfamily. Monoacylglycerol lipase family.

The protein localises to the lipid droplet. It localises to the cytoplasm. It is found in the endoplasmic reticulum. The protein resides in the mitochondrion outer membrane. It catalyses the reaction Hydrolyzes glycerol monoesters of long-chain fatty acids.. The enzyme catalyses a fatty acid ethyl ester + H2O = ethanol + a fatty acid + H(+). It carries out the reaction 1-(9Z-octadecenoyl)-glycerol + H2O = glycerol + (9Z)-octadecenoate + H(+). The catalysed reaction is 2-(9Z-octadecenoyl)-glycerol + H2O = glycerol + (9Z)-octadecenoate + H(+). It catalyses the reaction 1-hexadecanoylglycerol + H2O = glycerol + hexadecanoate + H(+). The enzyme catalyses 2-hexadecanoylglycerol + H2O = glycerol + hexadecanoate + H(+). It carries out the reaction ethyl hexadecanoate + H2O = ethanol + hexadecanoate + H(+). The catalysed reaction is ethyl (9Z)-octadecenoate + H2O = ethanol + (9Z)-octadecenoate + H(+). It catalyses the reaction ethyl (9Z)-hexadecenoate + H2O = (9Z)-hexadecenoate + ethanol + H(+). The enzyme catalyses ethyl octadecanoate + H2O = ethanol + octadecanoate + H(+). It functions in the pathway glycerolipid metabolism; triacylglycerol degradation. Its function is as follows. Converts monoacylglycerides (MAG) to free fatty acids and glycerol. Has a strong preference for monounsaturated monoglycerides. Required for efficient degradation of MAG, short-lived intermediates of glycerolipid metabolism which may also function as lipid signaling molecules. Controls inactivation of the signaling lipid N-palmitoylethanolamine (PEA). Involved in fatty acid ethyl ester (FAEE) catabolism. FAEEs are non-oxidative metabolites of ethanol that are transiently incorporated into lipid droplets (LDs). Their mobilization by LD-resident FAEE hydrolases facilitates a controlled metabolism of these potentially toxic lipid metabolites. This is Monoglyceride lipase (YJU3) from Saccharomyces cerevisiae (strain ATCC 204508 / S288c) (Baker's yeast).